Consider the following 93-residue polypeptide: Acylphosphatase (93 aa).

An Acylphosphatase-like domain is found at 7 to 93 (RLTAWVHGWV…TEQITGFSER (87 aa)). Catalysis depends on residues arginine 22 and asparagine 40.

Belongs to the acylphosphatase family.

It catalyses the reaction an acyl phosphate + H2O = a carboxylate + phosphate + H(+). This is Acylphosphatase (acyP) from Mycobacterium tuberculosis (strain ATCC 25177 / H37Ra).